Here is a 466-residue protein sequence, read N- to C-terminus: MALRFYNTLSQQVEEFTPASDNTVRMYTCGPTVYDFAHIGNFRTFTFVDLLRKVLRANGFQLNHVMNITDVDDKIIRNAVAQHQSLEQYTKIYTEAFLEDCKMLRLERPERIAPATEHIHDMVSAIERLGDSQHTYASDGSVYFKIASFPGYGKLSHNDFSGNLAGARVDVDEYEKADARDFALWKTPKEGEPFWDTTIGPGRPGWHIECSVMAIKYLGETLDIHAGGIDLVFPHHENEIAQSESLTGKLFSRFWLHAEFLMVEGQKMSKSLGNYYTLRDLVAKGYEPESIRYLLASVPYRKSLNFTLDGLKAARIAIERLRNFKRRLETEPFAEGLSAILAERTAQASQAFIGGLNEDLNTAEALASVFEYVRDLNSAMDSGEFRAGNTTAALEFLARFDSIFDVLKPTAKAGELSDAEIDAQIAARAAAKKSRDFALADQIRDQLLAQGIILEDTKSGVRWKRK.

Cys29 lines the Zn(2+) pocket. Positions 31 to 41 match the 'HIGH' region motif; it reads PTVYDFAHIGN. Residues Cys210, His235, and Glu239 each coordinate Zn(2+). The 'KMSKS' region motif lies at 267–271; sequence KMSKS. Residue Lys270 coordinates ATP.

This sequence belongs to the class-I aminoacyl-tRNA synthetase family. Monomer. Requires Zn(2+) as cofactor.

It localises to the cytoplasm. It carries out the reaction tRNA(Cys) + L-cysteine + ATP = L-cysteinyl-tRNA(Cys) + AMP + diphosphate. The protein is Cysteine--tRNA ligase of Solibacter usitatus (strain Ellin6076).